Consider the following 303-residue polypeptide: MSAKLIKGTEIREEILKEIEAEVKEIKEKHGKVPGLVTILVGESPASISYVTLKIQTAHRVGFKEVQDSQPVDISEADLLALIDKYNKDDSIHGILVQLPLPKHIDEKKVLNAIDPDKDVDGFHPVNVGRLMIGGSEVKFPPCTPAGIQEMIVRAGVETSGAEVVVVGRSNIVGKPIANMMLQKGPGANATVTVVHTRTKNMDEHCKRADILIVAAGVPGLVKPEWIKPGACVIDVGVNRVGEKPSAKDPNKMVAILSGDVDFDAAKEIAGSITPVPGGVGPMTITMLMLNTLKSLKFKLGLI.

NADP(+) is bound by residues 168–170 (GRS), Thr-197, and Val-238.

Belongs to the tetrahydrofolate dehydrogenase/cyclohydrolase family. Homodimer.

The enzyme catalyses (6R)-5,10-methylene-5,6,7,8-tetrahydrofolate + NADP(+) = (6R)-5,10-methenyltetrahydrofolate + NADPH. It carries out the reaction (6R)-5,10-methenyltetrahydrofolate + H2O = (6R)-10-formyltetrahydrofolate + H(+). It participates in one-carbon metabolism; tetrahydrofolate interconversion. Catalyzes the oxidation of 5,10-methylenetetrahydrofolate to 5,10-methenyltetrahydrofolate and then the hydrolysis of 5,10-methenyltetrahydrofolate to 10-formyltetrahydrofolate. This Desulfosudis oleivorans (strain DSM 6200 / JCM 39069 / Hxd3) (Desulfococcus oleovorans) protein is Bifunctional protein FolD.